We begin with the raw amino-acid sequence, 508 residues long: CXXC-type zinc finger protein 1 (508 aa).

The CXXC-type zinc finger occupies 10 to 47 (EDVWKERCMNCIRCNDEKNCGTCWPCRNGKTCDMRKCF). 2 disordered regions span residues 95 to 156 (QQVE…EPDK) and 453 to 508 (KSQS…TQNN). Low complexity-rich tracts occupy residues 113–123 (AAAAAQQRKAN) and 454–481 (SQST…SSSS).

In terms of assembly, component of the SET2 complex (also known as the SET1/COMPASS complex), which contains at least set-2, swd-2.1, cfp-1, rbbp-5, wdr-5.1, dpy-30 and ash-2. Within the complex, interacts with wdr-5.1, ash-2 and dpy-30. Also interacts with the SIN3S complex, which contains at least sin-3, hda-1, athp-1 and mrg-1. Interacts with sin-3, hda-1 and mrg-1.

It localises to the nucleus. Functionally, transcriptional activator that exhibits a unique DNA binding specificity for CpG motifs; enriched at promoters containing the trimethylation mark on histone H3 'Lys-4' (H3K4me3). Forms part of the SET2 complex and interacts with the SIN3S HDAC complex at promoters. Required for H3K4 trimethylation and plays a repressive role in the expression of heat shock and salt-inducible genes. Required for fertility, in cooperation with class I histone deacetylases (HDACs). The chain is CXXC-type zinc finger protein 1 from Caenorhabditis elegans.